A 225-amino-acid chain; its full sequence is Urease accessory protein UreE (225 aa).

The segment covering 171–215 (HHGHEHSHDHEHGHSHAAHEHSHGHDHTHGHDHDHGDHVHDESCG) has biased composition (basic and acidic residues). Residues 171-225 (HHGHEHSHDHEHGHSHAAHEHSHGHDHTHGHDHDHGDHVHDESCGHGHHHHHAHR) form a disordered region. The span at 216-225 (HGHHHHHAHR) shows a compositional bias: basic residues.

This sequence belongs to the UreE family.

It localises to the cytoplasm. In terms of biological role, involved in urease metallocenter assembly. Binds nickel. Probably functions as a nickel donor during metallocenter assembly. The chain is Urease accessory protein UreE from Paraburkholderia xenovorans (strain LB400).